Here is a 143-residue protein sequence, read N- to C-terminus: Transcriptional regulator MraZ (143 aa).

SpoVT-AbrB domains follow at residues 5-47 (TFTP…PREE) and 76-119 (ADEQ…DAQA).

This sequence belongs to the MraZ family. In terms of assembly, forms oligomers.

It localises to the cytoplasm. The protein localises to the nucleoid. This chain is Transcriptional regulator MraZ, found in Corynebacterium urealyticum (strain ATCC 43042 / DSM 7109).